The following is a 127-amino-acid chain: Glycine cleavage system H protein (127 aa).

One can recognise a Lipoyl-binding domain in the interval 24–105 (TLTVGVTDHA…AYAAWLFKLK (82 aa)). Residue Lys65 is modified to N6-lipoyllysine.

Belongs to the GcvH family. The glycine cleavage system is composed of four proteins: P, T, L and H. It depends on (R)-lipoate as a cofactor.

Functionally, the glycine cleavage system catalyzes the degradation of glycine. The H protein shuttles the methylamine group of glycine from the P protein to the T protein. This chain is Glycine cleavage system H protein, found in Azoarcus sp. (strain BH72).